The sequence spans 329 residues: MYG1 protein (329 aa).

Belongs to the MYG1 family.

The chain is MYG1 protein from Dictyostelium discoideum (Social amoeba).